The following is a 508-amino-acid chain: Photosystem II CP47 reaction center protein (508 aa).

Transmembrane regions (helical) follow at residues 21–36 (AVHI…WAGS), 101–115 (IVFS…IWHW), 140–156 (GIHL…FGAF), 203–218 (IAAG…FHLS), 237–252 (VLSS…AFVV), and 457–472 (TFAL…HGAR).

This sequence belongs to the PsbB/PsbC family. PsbB subfamily. In terms of assembly, PSII is composed of 1 copy each of membrane proteins PsbA, PsbB, PsbC, PsbD, PsbE, PsbF, PsbH, PsbI, PsbJ, PsbK, PsbL, PsbM, PsbT, PsbX, PsbY, PsbZ, Psb30/Ycf12, at least 3 peripheral proteins of the oxygen-evolving complex and a large number of cofactors. It forms dimeric complexes. Requires Binds multiple chlorophylls. PSII binds additional chlorophylls, carotenoids and specific lipids. as cofactor.

It localises to the plastid. The protein resides in the chloroplast thylakoid membrane. In terms of biological role, one of the components of the core complex of photosystem II (PSII). It binds chlorophyll and helps catalyze the primary light-induced photochemical processes of PSII. PSII is a light-driven water:plastoquinone oxidoreductase, using light energy to abstract electrons from H(2)O, generating O(2) and a proton gradient subsequently used for ATP formation. In Triticum aestivum (Wheat), this protein is Photosystem II CP47 reaction center protein.